The primary structure comprises 294 residues: Thymidylate synthase 1/2 (294 aa).

DUMP is bound by residues Arg-29 and 154-155 (RR). Cys-174 serves as the catalytic Nucleophile. DUMP is bound by residues 194–197 (RSGD), Asn-205, and 235–237 (HVY). Asp-197 contributes to the (6R)-5,10-methylene-5,6,7,8-tetrahydrofolate binding site.

This sequence belongs to the thymidylate synthase family.

The catalysed reaction is dUMP + (6R)-5,10-methylene-5,6,7,8-tetrahydrofolate = 7,8-dihydrofolate + dTMP. The protein operates within pyrimidine metabolism; dTTP biosynthesis. The polypeptide is Thymidylate synthase 1/2 (TS-1) (Encephalitozoon cuniculi (strain GB-M1) (Microsporidian parasite)).